We begin with the raw amino-acid sequence, 505 residues long: Protein amnionless (505 aa).

The N-terminal stretch at 1-20 is a signal peptide; sequence MGLHWQWLIWALVGLHVALA. Residues 21–344 lie on the Extracellular side of the membrane; that stretch reads TKWYGGGMDF…RPYNPNVSFS (324 aa). A helical membrane pass occupies residues 345-365; the sequence is SIVLILFCMALVGLVSVVILA. Over 366 to 505 the chain is Cytoplasmic; the sequence is HFMPENPYLN…CEADTDEETI (140 aa). The segment at 451–482 is disordered; it reads GALEEAAKESQEQDEILSVPKMETGDLDARSV. The span at 473–482 shows a compositional bias: basic and acidic residues; the sequence is ETGDLDARSV.

In terms of tissue distribution, specifically expressed in nephrocytes.

It localises to the cell membrane. Functionally, required in the nephrocyte for normal uptake of proteins and elimination of toxins, and for maintenance of endocytic trafficking structures. May function together with Cubn. The protein is Protein amnionless of Drosophila melanogaster (Fruit fly).